The following is an 89-amino-acid chain: Small ribosomal subunit protein uS15c (89 aa).

The protein belongs to the universal ribosomal protein uS15 family. In terms of assembly, part of the 30S ribosomal subunit.

The protein resides in the plastid. The protein localises to the organellar chromatophore. The chain is Small ribosomal subunit protein uS15c (rps15) from Paulinella chromatophora.